The chain runs to 935 residues: MRLSSAGFNPQPHEVTGEKRVLNSELWHACAGPLVSLPPVGSRVVYFPQGHSEQVAASTNKEVDAHIPNYPSLHPQLICQLHNVTMHADVETDEVYAQMTLQPLNAQEQKDPYLPAELGVPSRQPTNYFCKTLTASDTSTHGGFSVPRRAAEKVFPPLDYSQQPPAQELMARDLHDNEWKFRHIFRGQPKRHLLTTGWSVFVSAKRLVAGDSVLFIWNDKNQLLLGIRRANRPQTVMPSSVLSSDSMHLGLLAAAAHAAATNSRFTIFYNPRASPSEFVIPLAKYVKAVYHTRVSVGMRFRMLFETEESSVRRYMGTITGICDLDPTRWANSHWRSVKVGWDESTAGERQPRVSLWEIEPLTTFPMYPSPFPLRLKRPWPPGLPSFHGLKEDDMGMSMSSPLMWDRGLQSLNFQGMGVNPWMQPRLDTSGLLGMQNDVYQAMAAAALQDMRGIDPAKAAASLLQFQNSPGFSMQSPSLVQPQMLQQQLSQQQQQLSQQQQQQQQLSQQQQQQLSQQQQQQLSQQQQQQLSQQQQQQAYLGVPETHQPQSQAQSQSNNHLSQQQQQVVDNHNPSASSAAVVSAMSQFGSASQPNTSPLQSMTSLCHQQSFSDTNGGNNPISPLHTLLSNFSQDESSQLLHLTRTNSAMTSSGWPSKRPAVDSSFQHSGAGNNNTQSVLEQLGQSHTSNVPPNAVSLPPFPGGRECSIEQEGSASDPHSHLLFGVNIDSSSLLMPNGMSNLRSIGIEGGDSTTLPFTSSNFNNDFSGNLAMTTPSSCIDESGFLQSSENLGSENPQSNTFVKVYKSGSFGRSLDISKFSSYHELRSELARMFGLEGQLEDPVRSGWQLVFVDRENDVLLLGDDPWPEFVSSVWCIKILSPQEVQQMGKRGLELLNSAPSSNNVDKLPSNGNCDDFGNRSDPRNLGNGIASVGGSFNY.

The TF-B3 DNA-binding region spans 129–231; it reads FCKTLTASDT…QLLLGIRRAN (103 aa). 2 disordered regions span residues 536–624 and 645–714; these read QAYL…PLHT and SAMT…SASD. Composition is skewed to low complexity over residues 546 to 565 and 573 to 582; these read QPQS…QQQQ and SASSAAVVSA. Polar residues-rich tracts occupy residues 583–624 and 661–689; these read MSQF…PLHT and SSFQ…SNVP. One can recognise a PB1 domain in the interval 796-880; sequence NTFVKVYKSG…WCIKILSPQE (85 aa). Positions 896–909 are enriched in polar residues; that stretch reads PSSNNVDKLPSNGN. Residues 896–917 form a disordered region; sequence PSSNNVDKLPSNGNCDDFGNRS.

This sequence belongs to the ARF family. Homodimers and heterodimers. In terms of tissue distribution, expressed in the whole plant.

It is found in the nucleus. Auxin response factors (ARFs) are transcriptional factors that bind specifically to the DNA sequence 5'-TGTCTC-3' found in the auxin-responsive promoter elements (AuxREs). Seems to act as transcriptional activator. Formation of heterodimers with Aux/IAA proteins may alter their ability to modulate early auxin response genes expression. Regulates both stamen and gynoecium maturation. Promotes jasmonic acid production. Partially redundant with ARF8. The protein is Auxin response factor 6 (ARF6) of Arabidopsis thaliana (Mouse-ear cress).